A 355-amino-acid chain; its full sequence is Protein RecA (355 aa).

67–74 (GPESSGKT) contacts ATP. Residues 335 to 355 (NSLVSDVESEDEGASESNEEF) form a disordered region. Residues 341-355 (VESEDEGASESNEEF) are compositionally biased toward acidic residues.

This sequence belongs to the RecA family.

The protein localises to the cytoplasm. Functionally, can catalyze the hydrolysis of ATP in the presence of single-stranded DNA, the ATP-dependent uptake of single-stranded DNA by duplex DNA, and the ATP-dependent hybridization of homologous single-stranded DNAs. It interacts with LexA causing its activation and leading to its autocatalytic cleavage. In Sodalis glossinidius, this protein is Protein RecA.